The primary structure comprises 597 residues: Peptidyl-prolyl cis-trans isomerase-like 2 (597 aa).

The region spanning 41–114 (KKLPFNFCAA…TTDSDENKGD (74 aa)) is the U-box domain. Positions 328 to 483 (NKGYVRMETN…NKIVIKDMII (156 aa)) constitute a PPIase cyclophilin-type domain. Positions 495 to 519 (KKQKEGEEERKREVARQGGTEDDRT) are enriched in basic and acidic residues. Disordered regions lie at residues 495-521 (KKQK…RTTW) and 560-597 (ATTT…FDGW).

This sequence belongs to the cyclophilin-type PPIase family. PPIL2 subfamily.

The protein localises to the nucleus. The catalysed reaction is [protein]-peptidylproline (omega=180) = [protein]-peptidylproline (omega=0). It catalyses the reaction S-ubiquitinyl-[E2 ubiquitin-conjugating enzyme]-L-cysteine + [acceptor protein]-L-lysine = [E2 ubiquitin-conjugating enzyme]-L-cysteine + N(6)-ubiquitinyl-[acceptor protein]-L-lysine.. The protein operates within protein modification; protein ubiquitination. Its function is as follows. May catalyze the cis-trans isomerization of proline imidic peptide bonds in oligopeptides thereby assisting the folding of proteins. May also function as a chaperone, playing a role in intracellular transport of proteins. May also have a protein ubiquitin ligase activity acting as an E3 ubiquitin protein ligase or as a ubiquitin-ubiquitin ligase promoting elongation of ubiquitin chains on proteins. This Neurospora crassa (strain ATCC 24698 / 74-OR23-1A / CBS 708.71 / DSM 1257 / FGSC 987) protein is Peptidyl-prolyl cis-trans isomerase-like 2 (ppi-2).